Here is a 120-residue protein sequence, read N- to C-terminus: Nitrogen regulatory protein GlnK3 (120 aa).

ADP-binding positions include T40 and 48 to 50; that span reads GEQ. ATP-binding positions include T40 and 48–50; that span reads GEQ. 2-oxoglutarate contacts are provided by residues 48–52 and K69; that span reads GEQKG. Residues V75 and 98 to 101 contribute to the ADP site; that span reads GDGR. ATP contacts are provided by residues V75 and 98–101; that span reads GDGR. Residue G98 participates in 2-oxoglutarate binding.

It belongs to the P(II) protein family. As to quaternary structure, homotrimer. Interacts and forms a complex with Amt3.

It is found in the cytoplasm. With respect to regulation, activity is influenced by intracellular pools of the effector molecules ATP, ADP and 2-oxoglutarate. It senses the cellular nitrogen status through 2-oxoglutarate, and the energy level of the cell by binding both ATP and ADP with different affinities. ATP and 2-oxoglutarate prohibit binding to Amt3. ADP promotes the complex formation. Its function is as follows. Involved in the regulation of nitrogen metabolism. Regulates the activity of its targets by protein-protein interaction in response to the nitrogen status of the cell. Regulates the activity of the ammonia channel Amt3 via direct interaction. The protein is Nitrogen regulatory protein GlnK3 of Archaeoglobus fulgidus (strain ATCC 49558 / DSM 4304 / JCM 9628 / NBRC 100126 / VC-16).